The following is a 548-amino-acid chain: Natural resistance-associated macrophage protein 1 (548 aa).

The span at Met-1–Gly-12 shows a compositional bias: polar residues. The interval Met-1–Glu-38 is disordered. Residues Met-1 to Leu-55 are Cytoplasmic-facing. The helical transmembrane segment at Trp-56 to Gly-73 threads the bilayer. At Asn-74–Gly-82 the chain is on the extracellular side. A helical membrane pass occupies residues Ala-83–Leu-102. Residues Cys-103–Glu-139 lie on the Cytoplasmic side of the membrane. A helical transmembrane segment spans residues Leu-140–Leu-160. Topologically, residues Ser-161–Arg-164 are extracellular. The chain crosses the membrane as a helical span at residues Ile-165–Leu-184. The Cytoplasmic portion of the chain corresponds to Asp-185 to Glu-193. The chain crosses the membrane as a helical span at residues Ala-194 to Ala-214. At Arg-215–Glu-237 the chain is on the extracellular side. A helical transmembrane segment spans residues Leu-238–Leu-256. The Cytoplasmic portion of the chain corresponds to His-257–Glu-284. The chain crosses the membrane as a helical span at residues Ala-285 to Gly-304. The Extracellular portion of the chain corresponds to Gln-305–Gly-346. N-linked (GlcNAc...) asparagine glycosylation is found at Asn-321 and Asn-335. Residues Val-347–Leu-366 traverse the membrane as a helical segment. The Cytoplasmic segment spans residues Ala-367–Arg-397. Residues Val-398–Phe-415 form a helical membrane-spanning segment. Topologically, residues Arg-416–Asp-426 are extracellular. The helical transmembrane segment at Leu-427–Thr-447 threads the bilayer. The Cytoplasmic segment spans residues Ser-448 to Lys-463. Residues Ile-464–Val-485 form a helical membrane-spanning segment. Over Pro-486 to Tyr-493 the chain is Extracellular. The chain crosses the membrane as a helical span at residues Phe-494–Trp-513. Residues Thr-514–Gly-548 lie on the Cytoplasmic side of the membrane.

The protein belongs to the NRAMP family.

It is found in the late endosome membrane. Its subcellular location is the lysosome membrane. The enzyme catalyses Zn(2+)(in) + H(+)(out) = Zn(2+)(out) + H(+)(in). The catalysed reaction is Fe(2+)(in) + H(+)(out) = Fe(2+)(out) + H(+)(in). It carries out the reaction Mn(2+)(in) + H(+)(out) = Mn(2+)(out) + H(+)(in). In terms of biological role, macrophage-specific antiporter that fluxes metal ions in either direction against a proton gradient. Localized to late endosomal lysosomal membranes, delivers bivalent cations from the cytosol into these acidic compartments where they may directly affect antimicrobial activity. Involved in iron metabolism and host natural resistance to infection with intracellular parasites. Pathogen resistance involves sequestration of Fe(2+) and Mn(2+), cofactors of both prokaryotic and eukaryotic catalases and superoxide dismutases, not only to protect the macrophage against its own generation of reactive oxygen species, but to deny the cations to the pathogen for synthesis of its protective enzymes. This Ovis aries (Sheep) protein is Natural resistance-associated macrophage protein 1 (SLC11A1).